The chain runs to 175 residues: Transcriptional repressor NrdR (175 aa).

A zinc finger lies at 3 to 32; sequence CPYCSHPDSKVIDSRDVDDGVRRRRECVVC. The 91-residue stretch at 47–137 folds into the ATP-cone domain; sequence LFVVKKDQRR…VYREFTDITQ (91 aa).

Belongs to the NrdR family. Zn(2+) serves as cofactor.

Its function is as follows. Negatively regulates transcription of bacterial ribonucleotide reductase nrd genes and operons by binding to NrdR-boxes. The sequence is that of Transcriptional repressor NrdR from Dehalococcoides mccartyi (strain CBDB1).